A 183-amino-acid polypeptide reads, in one-letter code: Segregation and condensation protein B (183 aa).

The protein belongs to the ScpB family. In terms of assembly, homodimer. Homodimerization may be required to stabilize the binding of ScpA to the Smc head domains. Component of a cohesin-like complex composed of ScpA, ScpB and the Smc homodimer, in which ScpA and ScpB bind to the head domain of Smc. The presence of the three proteins is required for the association of the complex with DNA.

It is found in the cytoplasm. Functionally, participates in chromosomal partition during cell division. May act via the formation of a condensin-like complex containing Smc and ScpA that pull DNA away from mid-cell into both cell halves. This Streptococcus pyogenes serotype M1 protein is Segregation and condensation protein B.